The chain runs to 509 residues: Bifunctional purine biosynthesis protein PurH (509 aa).

An MGS-like domain is found at 1-144; sequence MKRALLSVSD…KNARDVIVVV (144 aa).

Belongs to the PurH family.

The enzyme catalyses (6R)-10-formyltetrahydrofolate + 5-amino-1-(5-phospho-beta-D-ribosyl)imidazole-4-carboxamide = 5-formamido-1-(5-phospho-D-ribosyl)imidazole-4-carboxamide + (6S)-5,6,7,8-tetrahydrofolate. The catalysed reaction is IMP + H2O = 5-formamido-1-(5-phospho-D-ribosyl)imidazole-4-carboxamide. It functions in the pathway purine metabolism; IMP biosynthesis via de novo pathway; 5-formamido-1-(5-phospho-D-ribosyl)imidazole-4-carboxamide from 5-amino-1-(5-phospho-D-ribosyl)imidazole-4-carboxamide (10-formyl THF route): step 1/1. Its pathway is purine metabolism; IMP biosynthesis via de novo pathway; IMP from 5-formamido-1-(5-phospho-D-ribosyl)imidazole-4-carboxamide: step 1/1. The polypeptide is Bifunctional purine biosynthesis protein PurH (Oenococcus oeni (strain ATCC BAA-331 / PSU-1)).